A 356-amino-acid chain; its full sequence is Protein RecA (356 aa).

67-74 provides a ligand contact to ATP; it reads GPESSGKT.

It belongs to the RecA family.

The protein resides in the cytoplasm. In terms of biological role, can catalyze the hydrolysis of ATP in the presence of single-stranded DNA, the ATP-dependent uptake of single-stranded DNA by duplex DNA, and the ATP-dependent hybridization of homologous single-stranded DNAs. It interacts with LexA causing its activation and leading to its autocatalytic cleavage. This chain is Protein RecA, found in Yersinia pestis bv. Antiqua (strain Angola).